The following is a 74-amino-acid chain: Exodeoxyribonuclease 7 small subunit (74 aa).

It belongs to the XseB family. As to quaternary structure, heterooligomer composed of large and small subunits.

Its subcellular location is the cytoplasm. The catalysed reaction is Exonucleolytic cleavage in either 5'- to 3'- or 3'- to 5'-direction to yield nucleoside 5'-phosphates.. Bidirectionally degrades single-stranded DNA into large acid-insoluble oligonucleotides, which are then degraded further into small acid-soluble oligonucleotides. This chain is Exodeoxyribonuclease 7 small subunit, found in Neisseria meningitidis serogroup A / serotype 4A (strain DSM 15465 / Z2491).